The following is a 172-amino-acid chain: 2S seed storage-like protein (172 aa).

An N-terminal signal peptide occupies residues 1–35; that stretch reads MGVFSPSTTRLTLKWFSLSVALFLLFHWGIPSVDG. Positions 108-172 are disordered; the sequence is FMDSDSQEDA…RYSMTGSSFK (65 aa). Basic and acidic residues predominate over residues 151–160; sequence EPPRRCDIQR.

Belongs to the 2S seed storage albumins family.

This Picea glauca (White spruce) protein is 2S seed storage-like protein.